Consider the following 241-residue polypeptide: Probable xyloglucan-specific endo-beta-1,4-glucanase A (241 aa).

The signal sequence occupies residues 1–18 (MKFNLALALSLTVATAEA).

The protein belongs to the glycosyl hydrolase 12 (cellulase H) family.

The protein localises to the secreted. The catalysed reaction is xyloglucan + H2O = xyloglucan oligosaccharides.. Catalyzes endohydrolysis of 1,4-beta-D-glucosidic linkages in xyloglucan with retention of the beta-configuration of the glycosyl residues. Specific for xyloglucan and does not hydrolyze other cell wall components. This chain is Probable xyloglucan-specific endo-beta-1,4-glucanase A (xgeA), found in Aspergillus clavatus (strain ATCC 1007 / CBS 513.65 / DSM 816 / NCTC 3887 / NRRL 1 / QM 1276 / 107).